The chain runs to 190 residues: Ribose 1,5-bisphosphate phosphokinase PhnN (190 aa).

11-18 (GPSGSGKD) contributes to the ATP binding site.

The protein belongs to the ribose 1,5-bisphosphokinase family.

It carries out the reaction alpha-D-ribose 1,5-bisphosphate + ATP = 5-phospho-alpha-D-ribose 1-diphosphate + ADP. It participates in metabolic intermediate biosynthesis; 5-phospho-alpha-D-ribose 1-diphosphate biosynthesis; 5-phospho-alpha-D-ribose 1-diphosphate from D-ribose 5-phosphate (route II): step 3/3. Its function is as follows. Catalyzes the phosphorylation of ribose 1,5-bisphosphate to 5-phospho-D-ribosyl alpha-1-diphosphate (PRPP). This Thiobacillus denitrificans (strain ATCC 25259 / T1) protein is Ribose 1,5-bisphosphate phosphokinase PhnN.